Consider the following 369-residue polypeptide: MVEYKPNQTVYAYHGPLIYEAKILKLKNGKDSFIINQDFQHEPLEEKPNSSGNHHHHHHSQHIAKFDPKKWQDQTCYYLHYQGWNSKWDEWVGIDRIMEYNEENKFKKLELDQLTKKKKAINNNEIIVNATTKNHTNNKNKKESNKRKSSSATTTSGVTAGTNNNKKQKSASTSTTNNTSGNSGTTSNKSKQILSRLNLNFPPELKHILVNDWEYITKDRKLVSLPSQYPINQILQDYKTYRTKQLTSNSDQLSILIEILTGLEIYFNKSLSLILLYKYEHLQYLNFLKQNIINPQQDILQSNIYGVEHLLRLIISFPGLLSTTTMDGISLSVLISELESLCRFIGDRLQLYQNNYEFTSPQYDSLARS.

Positions 9-97 (TVYAYHGPLI…WDEWVGIDRI (89 aa)) constitute a Tudor-knot domain. Disordered regions lie at residues 43 to 66 (PLEE…IAKF) and 126 to 191 (IIVN…NKSK). Residues 53–62 (NHHHHHHSQH) are compositionally biased toward basic residues. The span at 126-135 (IIVNATTKNH) shows a compositional bias: low complexity. The span at 136-149 (TNNKNKKESNKRKS) shows a compositional bias: basic residues. The segment covering 150 to 191 (SSATTTSGVTAGTNNNKKQKSASTSTTNNTSGNSGTTSNKSK) has biased composition (low complexity). Positions 193-368 (ILSRLNLNFP…TSPQYDSLAR (176 aa)) constitute an MRG domain.

This sequence belongs to the MRG family. As to quaternary structure, component of the NuA4 histone acetyltransferase complex.

The protein localises to the nucleus. Functionally, involved in deacetylation of histones, chromatin assembly and chromosome segregation. May act as a transcriptional oscillator, directing histone deacetylases to specific chromosomal domains. Component of the NuA4 histone acetyltransferase complex which is involved in transcriptional activation of selected genes principally by acetylation of nucleosomal histone H4 and H2A. The NuA4 complex is also involved in DNA repair. This chain is Chromatin modification-related protein EAF3 (EAF3), found in Candida albicans (strain SC5314 / ATCC MYA-2876) (Yeast).